A 122-amino-acid polypeptide reads, in one-letter code: Iron-sulfur cluster assembly protein SufA (122 aa).

Residues C50, C114, and C116 each contribute to the [2Fe-2S] cluster site. Positions 50, 114, and 116 each coordinate [4Fe-4S] cluster.

Belongs to the HesB/IscA family. As to quaternary structure, homodimer. Interacts with SufB and SufC.

Functionally, member of gene cluster sufABCDSE that mediates iron-sulfur cluster assembly under oxidative stress and iron limitation conditions. Binds [2Fe-2S] and [4Fe-4S] clusters by mobilizing sulfur atoms provided by the SufS-SufE cysteine desulfurase system and then transfers the assembled Fe-S clusters to target proteins including ferredoxin and aconitase. Seems to act as a Fe-S cluster carrier rather than a scaffold, this role being performed by SufB and SufC. The sequence is that of Iron-sulfur cluster assembly protein SufA (sufA) from Escherichia coli (strain K12).